A 452-amino-acid polypeptide reads, in one-letter code: Bifunctional protein GlmU (452 aa).

Residues 1 to 226 (MSLAVVILAA…GWEVDGVNDR (226 aa)) are pyrophosphorylase. UDP-N-acetyl-alpha-D-glucosamine is bound by residues 8–11 (LAAG), K22, Q73, 78–79 (GT), 99–101 (YGD), G136, E151, N166, and N224. D101 lines the Mg(2+) pocket. Mg(2+) is bound at residue N224. A linker region spans residues 227 to 247 (VQLARLERIYQQAQAETLMRD). Residues 248–452 (GVTLLDPSRL…VANWQRPKKG (205 aa)) form an N-acetyltransferase region. Positions 330 and 348 each coordinate UDP-N-acetyl-alpha-D-glucosamine. The active-site Proton acceptor is H360. The UDP-N-acetyl-alpha-D-glucosamine site is built by Y363 and N374. Residues A377, 383–384 (NY), S402, A420, and R437 contribute to the acetyl-CoA site.

The protein in the N-terminal section; belongs to the N-acetylglucosamine-1-phosphate uridyltransferase family. This sequence in the C-terminal section; belongs to the transferase hexapeptide repeat family. As to quaternary structure, homotrimer. The cofactor is Mg(2+).

Its subcellular location is the cytoplasm. The enzyme catalyses alpha-D-glucosamine 1-phosphate + acetyl-CoA = N-acetyl-alpha-D-glucosamine 1-phosphate + CoA + H(+). It catalyses the reaction N-acetyl-alpha-D-glucosamine 1-phosphate + UTP + H(+) = UDP-N-acetyl-alpha-D-glucosamine + diphosphate. The protein operates within nucleotide-sugar biosynthesis; UDP-N-acetyl-alpha-D-glucosamine biosynthesis; N-acetyl-alpha-D-glucosamine 1-phosphate from alpha-D-glucosamine 6-phosphate (route II): step 2/2. It functions in the pathway nucleotide-sugar biosynthesis; UDP-N-acetyl-alpha-D-glucosamine biosynthesis; UDP-N-acetyl-alpha-D-glucosamine from N-acetyl-alpha-D-glucosamine 1-phosphate: step 1/1. It participates in bacterial outer membrane biogenesis; LPS lipid A biosynthesis. Its function is as follows. Catalyzes the last two sequential reactions in the de novo biosynthetic pathway for UDP-N-acetylglucosamine (UDP-GlcNAc). The C-terminal domain catalyzes the transfer of acetyl group from acetyl coenzyme A to glucosamine-1-phosphate (GlcN-1-P) to produce N-acetylglucosamine-1-phosphate (GlcNAc-1-P), which is converted into UDP-GlcNAc by the transfer of uridine 5-monophosphate (from uridine 5-triphosphate), a reaction catalyzed by the N-terminal domain. The polypeptide is Bifunctional protein GlmU (Alcanivorax borkumensis (strain ATCC 700651 / DSM 11573 / NCIMB 13689 / SK2)).